We begin with the raw amino-acid sequence, 536 residues long: Phosphoenolpyruvate carboxykinase (ATP) (536 aa).

Substrate contacts are provided by Arg61, Tyr195, and Lys201. ATP contacts are provided by residues Lys201, His220, and 236 to 244 (GLSGTGKTT). Mn(2+)-binding residues include Lys201 and His220. Position 257 (Asp257) interacts with Mn(2+). ATP-binding residues include Glu285, Arg322, and Thr447. Residue Arg322 participates in substrate binding.

Belongs to the phosphoenolpyruvate carboxykinase (ATP) family. It depends on Mn(2+) as a cofactor.

It is found in the cytoplasm. It catalyses the reaction oxaloacetate + ATP = phosphoenolpyruvate + ADP + CO2. It participates in carbohydrate biosynthesis; gluconeogenesis. Functionally, involved in the gluconeogenesis. Catalyzes the conversion of oxaloacetate (OAA) to phosphoenolpyruvate (PEP) through direct phosphoryl transfer between the nucleoside triphosphate and OAA. The chain is Phosphoenolpyruvate carboxykinase (ATP) from Sinorhizobium medicae (strain WSM419) (Ensifer medicae).